The sequence spans 322 residues: Phosphatidylserine decarboxylase proenzyme (322 aa).

Residues Asp-90, His-147, and Ser-254 each act as charge relay system; for autoendoproteolytic cleavage activity in the active site. The active-site Schiff-base intermediate with substrate; via pyruvic acid; for decarboxylase activity is Ser-254. Ser-254 carries the pyruvic acid (Ser); by autocatalysis modification. A disordered region spans residues 293-322 (PDAEPAPLPAEEIEAEHDASPLVDDKKDQV). Positions 308–322 (EHDASPLVDDKKDQV) are enriched in basic and acidic residues.

The protein belongs to the phosphatidylserine decarboxylase family. PSD-B subfamily. Prokaryotic type I sub-subfamily. As to quaternary structure, heterodimer of a large membrane-associated beta subunit and a small pyruvoyl-containing alpha subunit. It depends on pyruvate as a cofactor. Is synthesized initially as an inactive proenzyme. Formation of the active enzyme involves a self-maturation process in which the active site pyruvoyl group is generated from an internal serine residue via an autocatalytic post-translational modification. Two non-identical subunits are generated from the proenzyme in this reaction, and the pyruvate is formed at the N-terminus of the alpha chain, which is derived from the carboxyl end of the proenzyme. The autoendoproteolytic cleavage occurs by a canonical serine protease mechanism, in which the side chain hydroxyl group of the serine supplies its oxygen atom to form the C-terminus of the beta chain, while the remainder of the serine residue undergoes an oxidative deamination to produce ammonia and the pyruvoyl prosthetic group on the alpha chain. During this reaction, the Ser that is part of the protease active site of the proenzyme becomes the pyruvoyl prosthetic group, which constitutes an essential element of the active site of the mature decarboxylase.

It is found in the cell membrane. The enzyme catalyses a 1,2-diacyl-sn-glycero-3-phospho-L-serine + H(+) = a 1,2-diacyl-sn-glycero-3-phosphoethanolamine + CO2. It functions in the pathway phospholipid metabolism; phosphatidylethanolamine biosynthesis; phosphatidylethanolamine from CDP-diacylglycerol: step 2/2. Its function is as follows. Catalyzes the formation of phosphatidylethanolamine (PtdEtn) from phosphatidylserine (PtdSer). The sequence is that of Phosphatidylserine decarboxylase proenzyme from Escherichia coli O139:H28 (strain E24377A / ETEC).